A 340-amino-acid polypeptide reads, in one-letter code: Guanine nucleotide-binding protein G(I)/G(S)/G(T) subunit beta-3 (340 aa).

WD repeat units follow at residues 53–83 (GHLA…IVWD), 95–125 (LRSS…SIYN), 141–170 (AHTG…ALWD), 182–212 (GHTG…KLWD), 224–254 (GHES…RLFD), 268–298 (SIIC…NVWD), and 310–340 (GHDN…KIWN).

This sequence belongs to the WD repeat G protein beta family. In terms of assembly, g proteins are composed of 3 units, alpha, beta and gamma. Interacts with RASD2.

In terms of biological role, guanine nucleotide-binding proteins (G proteins) are involved as a modulator or transducer in various transmembrane signaling systems. The beta and gamma chains are required for the GTPase activity, for replacement of GDP by GTP, and for G protein-effector interaction. The sequence is that of Guanine nucleotide-binding protein G(I)/G(S)/G(T) subunit beta-3 (Gnb3) from Mus musculus (Mouse).